A 340-amino-acid chain; its full sequence is Solute carrier family 35 member G3 (340 aa).

The disordered stretch occupies residues proline 11–cysteine 33. Transmembrane regions (helical) follow at residues threonine 39–phenylalanine 59, leucine 69–leucine 89, phenylalanine 107–valine 127, alanine 160–glycine 180, leucine 189–leucine 209, threonine 223–leucine 243, cysteine 257–threonine 277, leucine 283–leucine 303, and valine 307–alanine 327. The EamA 1 domain occupies leucine 51–glycine 176. In terms of domain architecture, EamA 2 spans tyrosine 274–alanine 327.

This sequence belongs to the SLC35G solute transporter family.

It is found in the membrane. In Mus musculus (Mouse), this protein is Solute carrier family 35 member G3 (Slc35g3).